The sequence spans 504 residues: Anaerobic nitric oxide reductase transcription regulator NorR (504 aa).

D57 is subject to 4-aspartylphosphate. Positions 187 to 416 (MIGLSPGMTQ…LEHAIHRAVV (230 aa)) constitute a Sigma-54 factor interaction domain. Residues 215–222 (GETGTGKE) and 278–287 (ADNGTLFLDE) each bind ATP. The H-T-H motif DNA-binding region spans 479 to 498 (WAACARMLETDVANLHRLAK).

The protein operates within nitrogen metabolism; nitric oxide reduction. Required for the expression of anaerobic nitric oxide (NO) reductase, acts as a transcriptional activator for at least the norVW operon. Activation also requires sigma-54. The chain is Anaerobic nitric oxide reductase transcription regulator NorR from Shigella boydii serotype 4 (strain Sb227).